The primary structure comprises 260 residues: Phytolongin Phyl2.1 (260 aa).

Residues 12–114 (CIAKGTVILA…LDNPTQHCLQ (103 aa)) enclose the Longin domain. Residues 231-251 (WIVLMFDLCICLVLFGIWLWI) form a helical; Anchor for type IV membrane protein membrane-spanning segment.

It belongs to the synaptobrevin family.

It is found in the membrane. In terms of biological role, non-SNARE longin protein involved in membrane-trafficking machinery. This is Phytolongin Phyl2.1 from Arabidopsis thaliana (Mouse-ear cress).